Reading from the N-terminus, the 370-residue chain is 3-dehydroquinate synthase (370 aa).

Residues 112–116 (GVVGD), 136–137 (TS), Lys-149, Lys-158, and 176–179 (TLRT) contribute to the NAD(+) site. 3 residues coordinate Zn(2+): Glu-191, His-254, and His-276.

It belongs to the sugar phosphate cyclases superfamily. Dehydroquinate synthase family. Co(2+) is required as a cofactor. Requires Zn(2+) as cofactor. NAD(+) serves as cofactor.

The protein localises to the cytoplasm. The catalysed reaction is 7-phospho-2-dehydro-3-deoxy-D-arabino-heptonate = 3-dehydroquinate + phosphate. It functions in the pathway metabolic intermediate biosynthesis; chorismate biosynthesis; chorismate from D-erythrose 4-phosphate and phosphoenolpyruvate: step 2/7. Functionally, catalyzes the conversion of 3-deoxy-D-arabino-heptulosonate 7-phosphate (DAHP) to dehydroquinate (DHQ). In Xanthomonas oryzae pv. oryzae (strain PXO99A), this protein is 3-dehydroquinate synthase.